Reading from the N-terminus, the 198-residue chain is Superoxide dismutase [Mn], mitochondrial (198 aa).

Mn(2+) is bound at residue H26. Y34 is subject to 3'-nitrotyrosine. N6-acetyllysine; alternate is present on residues K44 and K51. 2 positions are modified to N6-succinyllysine; alternate: K44 and K51. H74 lines the Mn(2+) pocket. Residue K90 is modified to N6-acetyllysine. 2 positions are modified to N6-acetyllysine; alternate: K98 and K106. N6-succinyllysine; alternate is present on residues K98 and K106. Mn(2+)-binding residues include D159 and H163. Residue K178 is modified to N6-acetyllysine.

Belongs to the iron/manganese superoxide dismutase family. Homotetramer. Requires Mn(2+) as cofactor. In terms of processing, nitrated under oxidative stress. Nitration coupled with oxidation inhibits the catalytic activity. Acetylation at Lys-98 decreases enzymatic activity. Deacetylated by SIRT3 upon exposure to ionizing radiations or after long fasting. Post-translationally, polyubiquitinated; leading to proteasomal degradation. Deubiquitinated by USP36 which increases protein stability.

Its subcellular location is the mitochondrion matrix. The catalysed reaction is 2 superoxide + 2 H(+) = H2O2 + O2. Functionally, destroys superoxide anion radicals which are normally produced within the cells and which are toxic to biological systems. The polypeptide is Superoxide dismutase [Mn], mitochondrial (SOD2) (Pan troglodytes (Chimpanzee)).